The following is a 140-amino-acid chain: Nucleoside diphosphate kinase (140 aa).

Residues lysine 11, phenylalanine 59, arginine 87, threonine 93, arginine 104, and asparagine 114 each contribute to the ATP site. The active-site Pros-phosphohistidine intermediate is histidine 117.

Belongs to the NDK family. Homotetramer. It depends on Mg(2+) as a cofactor.

It localises to the cytoplasm. It catalyses the reaction a 2'-deoxyribonucleoside 5'-diphosphate + ATP = a 2'-deoxyribonucleoside 5'-triphosphate + ADP. The catalysed reaction is a ribonucleoside 5'-diphosphate + ATP = a ribonucleoside 5'-triphosphate + ADP. Major role in the synthesis of nucleoside triphosphates other than ATP. The ATP gamma phosphate is transferred to the NDP beta phosphate via a ping-pong mechanism, using a phosphorylated active-site intermediate. In Methylobacterium sp. (strain 4-46), this protein is Nucleoside diphosphate kinase.